The primary structure comprises 279 residues: Nitrogenase vanadium-iron protein alpha chain (279 aa).

The [8Fe-7S] cluster site is built by Cys5, Cys31, and Cys94. Cys213 serves as a coordination point for [7Fe-V-9S-C-homocitryl] cluster.

This sequence belongs to the NifD/NifK/NifE/NifN family. As to quaternary structure, hexamer of two alpha, two beta, and two delta chains. [8Fe-7S] cluster serves as cofactor. It depends on [7Fe-V-9S-C-homocitryl] cluster as a cofactor.

It catalyses the reaction N2 + 8 reduced [2Fe-2S]-[ferredoxin] + 16 ATP + 16 H2O = H2 + 8 oxidized [2Fe-2S]-[ferredoxin] + 2 NH4(+) + 16 ADP + 16 phosphate + 6 H(+). This vanadium-iron protein is part of the nitrogenase complex that catalyzes the key enzymatic reactions in nitrogen fixation. This Azotobacter salinestris protein is Nitrogenase vanadium-iron protein alpha chain (vnfD).